A 566-amino-acid polypeptide reads, in one-letter code: Developmental regulatory protein wetA (566 aa).

Disordered stretches follow at residues 116–174 (VPAV…LMRP), 232–316 (STEG…SDSL), 334–364 (AWWP…SIQS), 381–400 (SSFD…VTSA), and 429–542 (PPVQ…RRRK). Composition is skewed to polar residues over residues 165-174 (QSFSPSLMRP) and 269-291 (AQQQ…SSPP). Residues 298-316 (SSPHSSDPQSLSSWHSDSL) are compositionally biased toward low complexity. Composition is skewed to polar residues over residues 347-364 (PSYQ…SIQS) and 381-398 (SSFD…SVVT). Low complexity predominate over residues 435–448 (SRSPSLSPRGRGSP). Residues 449-462 (TQGSPLRNEASTKT) show a composition bias toward polar residues. A compositionally biased stretch (basic residues) spans 463 to 473 (SPHRRGYHGRK). A compositionally biased stretch (low complexity) spans 482 to 500 (PKPVKGPNSSSPGSGSNKS). Residues 501–511 (LTVSFVNFTPN) are compositionally biased toward polar residues.

This sequence belongs to the wetA family.

Its function is as follows. BrlA, abaA and wetA are pivotal regulators of conidiophore development and conidium maturation. They act individually and together to regulate their own expression and that of numerous other sporulation-specific genes. Plays an essential role in the completion of conidial maturation and is essential for trehalose biogenesis in conidia. Negatively regulates expression of the melanin biosynthetic gene cluster. Also plays an a role in the early phase of fungal growth including proper hyphal branching. The protein is Developmental regulatory protein wetA of Aspergillus fumigatus (strain ATCC MYA-4609 / CBS 101355 / FGSC A1100 / Af293) (Neosartorya fumigata).